The primary structure comprises 283 residues: Pantothenate synthetase (283 aa).

30-37 (MGNLHSGH) contributes to the ATP binding site. Catalysis depends on His37, which acts as the Proton donor. Gln61 contacts (R)-pantoate. Gln61 contacts beta-alanine. Residue 149-152 (GEKD) coordinates ATP. Gln155 contacts (R)-pantoate. ATP contacts are provided by residues Val178 and 186-189 (LSSR).

It belongs to the pantothenate synthetase family. As to quaternary structure, homodimer.

It localises to the cytoplasm. The catalysed reaction is (R)-pantoate + beta-alanine + ATP = (R)-pantothenate + AMP + diphosphate + H(+). It participates in cofactor biosynthesis; (R)-pantothenate biosynthesis; (R)-pantothenate from (R)-pantoate and beta-alanine: step 1/1. Its function is as follows. Catalyzes the condensation of pantoate with beta-alanine in an ATP-dependent reaction via a pantoyl-adenylate intermediate. The polypeptide is Pantothenate synthetase (Pseudomonas savastanoi pv. phaseolicola (strain 1448A / Race 6) (Pseudomonas syringae pv. phaseolicola (strain 1448A / Race 6))).